Consider the following 259-residue polypeptide: Peroxisomal membrane protein 11B (259 aa).

At Lys-43 the chain carries N6-acetyllysine. An interaction with PEX19, PEX11G and FIS1 and peroxisome targeting region spans residues 211-259 (VVRNACDLFIPLDKLGLWRCGPGIVGLCGLVSSILSILTLIYPWLRLKP). Residues 234 to 254 (IVGLCGLVSSILSILTLIYPW) traverse the membrane as a helical segment.

It belongs to the peroxin-11 family. As to quaternary structure, homodimer. Heterodimer with PEX11G. Interacts with PEX19. Interacts with FIS1.

The protein localises to the peroxisome membrane. Functionally, involved in peroxisomal proliferation. May regulate peroxisome division by recruiting the dynamin-related GTPase DNM1L to the peroxisomal membrane. Promotes membrane protrusion and elongation on the peroxisomal surface. This chain is Peroxisomal membrane protein 11B (PEX11B), found in Pongo abelii (Sumatran orangutan).